Reading from the N-terminus, the 365-residue chain is Methionine import ATP-binding protein MetN (365 aa).

The 236-residue stretch at 26–261 (VRLVDLKRRF…PQSDITKSLL (236 aa)) folds into the ABC transporter domain. 58 to 65 (GRSGAGKS) is a binding site for ATP.

This sequence belongs to the ABC transporter superfamily. Methionine importer (TC 3.A.1.24) family. As to quaternary structure, the complex is composed of two ATP-binding proteins (MetN), two transmembrane proteins (MetI) and a solute-binding protein (MetQ).

Its subcellular location is the cell inner membrane. The enzyme catalyses L-methionine(out) + ATP + H2O = L-methionine(in) + ADP + phosphate + H(+). It carries out the reaction D-methionine(out) + ATP + H2O = D-methionine(in) + ADP + phosphate + H(+). Functionally, part of the ABC transporter complex MetNIQ involved in methionine import. Responsible for energy coupling to the transport system. The sequence is that of Methionine import ATP-binding protein MetN from Mesorhizobium japonicum (strain LMG 29417 / CECT 9101 / MAFF 303099) (Mesorhizobium loti (strain MAFF 303099)).